A 688-amino-acid polypeptide reads, in one-letter code: MSDGPETAEGDTDDAVQDAAVNSRVASESSARSQPRATVVGCLPPTPFAIHTTPAPSEHSKEKNVSRRLPTEKTPSRLATPQFPPTPVSSRGSIAEPSAYPSITQALRSCLPPQKDIEILLSNLSSMSIFCYKSSFKLCSSWPSEMTEEQIPIANLLYSETHPVLLARHMLLFAVGLQHLSPTKAIPGLTRHHRAIMEQLADSAIKLVNTDDVLLGTLEGLENLILESFYHIDGGNIRRAWITMRRAVMTAQLLGLHRPGHYRFKTVNKQNDLDPAVMWACIVSTEQFLCLLLGLPTSTSGASFTIPRATSACVESGNLPVLIPDVVRKIIERNQTHVPQEALDMTQKIDHELLGVVKQWPPAFWRPLQLSGLEVDSADAFWETRRAWDHIFYYSLVNQLHLPYMLNPSHVSQKVYSRIACASASREILIRQIAIRTFNPVTAGCRMGDFVALIAGMTLMLAHILSHCSKGTENLLVHQRVGDRATVERALECMESMSEQHEDILTAKCAALLKNLLDIEAGPAEARSDDGQKDDQNVLVVKVPHVGAIKIARDGISITPFDTEQEQVSHDGVTIGGFGSIHVSTPHDSDRDGDHQADVVTPNDTASQATTQVVRPASARKQWRPVSQRSSGDVFTLPEETFPDASAGMEEWLFQGLDTAFFDVLISGAGEQPLNSTDTEGWNFVMSP.

Over residues 1 to 16 the composition is skewed to acidic residues; it reads MSDGPETAEGDTDDAV. Residues 1-95 form a disordered region; the sequence is MSDGPETAEG…TPVSSRGSIA (95 aa). Residues 24 to 36 are compositionally biased toward polar residues; that stretch reads RVASESSARSQPR. Over residues 58–75 the composition is skewed to basic and acidic residues; that stretch reads EHSKEKNVSRRLPTEKTP.

Its subcellular location is the nucleus. In terms of biological role, probable transcription factor that regulates expression of the gene cluster that mediates the biosynthesis of Griseofulvin, an important antifungal drug that has been in use for a long time for treating dermatophyte infections. This chain is Probable transcription factor gsfR1, found in Penicillium aethiopicum.